We begin with the raw amino-acid sequence, 431 residues long: 5-methylthioadenosine/S-adenosylhomocysteine deaminase (431 aa).

Zn(2+) is bound by residues His-66 and His-68. Glu-95, Arg-147, and His-185 together coordinate substrate. His-212 contacts Zn(2+). 2 residues coordinate substrate: Glu-215 and Asp-300. Asp-300 is a binding site for Zn(2+).

The protein belongs to the metallo-dependent hydrolases superfamily. MTA/SAH deaminase family. Requires Zn(2+) as cofactor.

The enzyme catalyses S-adenosyl-L-homocysteine + H2O + H(+) = S-inosyl-L-homocysteine + NH4(+). The catalysed reaction is S-methyl-5'-thioadenosine + H2O + H(+) = S-methyl-5'-thioinosine + NH4(+). Functionally, catalyzes the deamination of 5-methylthioadenosine and S-adenosyl-L-homocysteine into 5-methylthioinosine and S-inosyl-L-homocysteine, respectively. Is also able to deaminate adenosine. The sequence is that of 5-methylthioadenosine/S-adenosylhomocysteine deaminase from Desulfitobacterium hafniense (strain Y51).